The chain runs to 76 residues: Small ribosomal subunit protein bS18 (76 aa).

This sequence belongs to the bacterial ribosomal protein bS18 family. In terms of assembly, part of the 30S ribosomal subunit. Forms a tight heterodimer with protein bS6.

In terms of biological role, binds as a heterodimer with protein bS6 to the central domain of the 16S rRNA, where it helps stabilize the platform of the 30S subunit. The sequence is that of Small ribosomal subunit protein bS18 from Mesoplasma florum (strain ATCC 33453 / NBRC 100688 / NCTC 11704 / L1) (Acholeplasma florum).